The sequence spans 217 residues: MPETEKPLFGHPWIFIRGVPSLNFLPPEGPLEVAFAGRSNVGKSSLINALVGQKGLARTSNTPGRTQELNYFVPDGYSGEGGDLPPTAIVDMPGYGYAQAPKEQVDKWTKLVFDYLRGRATLKRVYVLIDSRHGIKKNDDDVLDLLDKAAVSYQIVLTKTDKIKAAGVPKLLAETAEKIRKRPAAYPGVLSTSSEKGDGLDELRQAIAETVGIARWK.

The EngB-type G domain maps to 29-213 (GPLEVAFAGR…RQAIAETVGI (185 aa)). GTP-binding positions include 37 to 44 (GRSNVGKS), 64 to 68 (GRTQE), 91 to 94 (DMPG), 158 to 161 (TKTD), and 192 to 194 (TSS). Mg(2+) contacts are provided by Ser-44 and Thr-66.

It belongs to the TRAFAC class TrmE-Era-EngA-EngB-Septin-like GTPase superfamily. EngB GTPase family. It depends on Mg(2+) as a cofactor.

In terms of biological role, necessary for normal cell division and for the maintenance of normal septation. This is Probable GTP-binding protein EngB from Rhizobium johnstonii (strain DSM 114642 / LMG 32736 / 3841) (Rhizobium leguminosarum bv. viciae).